The sequence spans 153 residues: Aspartate carbamoyltransferase regulatory chain (153 aa).

Zn(2+) contacts are provided by C109, C114, C138, and C141.

Belongs to the PyrI family. As to quaternary structure, contains catalytic and regulatory chains. It depends on Zn(2+) as a cofactor.

Involved in allosteric regulation of aspartate carbamoyltransferase. This Wigglesworthia glossinidia brevipalpis protein is Aspartate carbamoyltransferase regulatory chain.